The chain runs to 226 residues: Ribose-5-phosphate isomerase A (226 aa).

Residues 26-29, 82-85, and 95-98 each bind substrate; these read TGST, DGAD, and KGGG. Glu104 serves as the catalytic Proton acceptor. Residue Lys122 participates in substrate binding.

The protein belongs to the ribose 5-phosphate isomerase family. As to quaternary structure, homodimer.

It carries out the reaction aldehydo-D-ribose 5-phosphate = D-ribulose 5-phosphate. Its pathway is carbohydrate degradation; pentose phosphate pathway; D-ribose 5-phosphate from D-ribulose 5-phosphate (non-oxidative stage): step 1/1. Functionally, catalyzes the reversible conversion of ribose-5-phosphate to ribulose 5-phosphate. This is Ribose-5-phosphate isomerase A from Streptococcus thermophilus (strain ATCC BAA-250 / LMG 18311).